Here is a 327-residue protein sequence, read N- to C-terminus: Annexin A8 (327 aa).

4 Annexin repeats span residues 21-92 (FNPD…ALMY), 93-164 (PPYR…CLLQ), 177-249 (GLAL…TVVK), and 253-324 (NLHS…SLVG). Residues methionine 266, glycine 268, glycine 270, and aspartate 310 each coordinate Ca(2+).

Belongs to the annexin family.

Its function is as follows. This protein is an anticoagulant protein that acts as an indirect inhibitor of the thromboplastin-specific complex, which is involved in the blood coagulation cascade. This Homo sapiens (Human) protein is Annexin A8.